We begin with the raw amino-acid sequence, 358 residues long: Alanine racemase (358 aa).

The Proton acceptor; specific for D-alanine role is filled by lysine 34. The residue at position 34 (lysine 34) is an N6-(pyridoxal phosphate)lysine. Arginine 129 serves as a coordination point for substrate. Residue tyrosine 254 is the Proton acceptor; specific for L-alanine of the active site. Methionine 302 lines the substrate pocket.

The protein belongs to the alanine racemase family. Pyridoxal 5'-phosphate is required as a cofactor.

It catalyses the reaction L-alanine = D-alanine. It functions in the pathway amino-acid biosynthesis; D-alanine biosynthesis; D-alanine from L-alanine: step 1/1. Catalyzes the interconversion of L-alanine and D-alanine. May also act on other amino acids. This is Alanine racemase (alr) from Vibrio atlanticus (strain LGP32) (Vibrio splendidus (strain Mel32)).